Reading from the N-terminus, the 284-residue chain is Isopentenyl-diphosphate Delta-isomerase II, chloroplastic (284 aa).

Residues 1–45 constitute a chloroplast transit peptide; it reads MSASSLFNLPLIRLRSLALSSSFSSFRFAHRPLSSISPRKLPNFR. N-acetylalanine is present on A46. Substrate is bound at residue K88. Mg(2+) contacts are provided by H92 and H104. The region spanning 102–254 is the Nudix hydrolase domain; it reads LLHRAFSVFL…GLKLSPWFRL (153 aa). Substrate contacts are provided by R123 and K127. Residue C139 is part of the active site. Position 140 (S140) interacts with substrate. The Nudix box signature appears at 140 to 170; it reads SHPLYRESELIQDNALGVRNAAQRKLLDELG. Mg(2+)-binding residues include E199 and E201. The active site involves E201.

The protein belongs to the IPP isomerase type 1 family. It depends on Mg(2+) as a cofactor.

It is found in the plastid. The protein resides in the chloroplast. The enzyme catalyses isopentenyl diphosphate = dimethylallyl diphosphate. It functions in the pathway isoprenoid biosynthesis; dimethylallyl diphosphate biosynthesis; dimethylallyl diphosphate from isopentenyl diphosphate: step 1/1. Its pathway is porphyrin-containing compound metabolism; chlorophyll biosynthesis. Catalyzes the 1,3-allylic rearrangement of the homoallylic substrate isopentenyl (IPP) to its highly electrophilic allylic isomer, dimethylallyl diphosphate (DMAPP). This Arabidopsis thaliana (Mouse-ear cress) protein is Isopentenyl-diphosphate Delta-isomerase II, chloroplastic (IPP2).